The sequence spans 247 residues: Caffeoyl-CoA O-methyltransferase 2 (247 aa).

Residue Lys-21 coordinates substrate. Residues Thr-63, Glu-85, 87-88 (GV), Ser-93, Asp-111, and Ala-140 contribute to the S-adenosyl-L-methionine site. Substrate is bound at residue Asp-163. Asp-163 serves as a coordination point for a divalent metal cation. Asp-165 lines the S-adenosyl-L-methionine pocket. Residues Asp-189 and Asn-190 each coordinate a divalent metal cation. Asn-194 contacts substrate.

It belongs to the class I-like SAM-binding methyltransferase superfamily. Cation-dependent O-methyltransferase family. CCoAMT subfamily. It depends on a divalent metal cation as a cofactor.

The enzyme catalyses (E)-caffeoyl-CoA + S-adenosyl-L-methionine = (E)-feruloyl-CoA + S-adenosyl-L-homocysteine + H(+). Its pathway is aromatic compound metabolism; phenylpropanoid biosynthesis. Its function is as follows. Methylates caffeoyl-CoA to feruloyl-CoA and 5-hydroxyferuloyl-CoA to sinapoyl-CoA. Plays a role in the synthesis of feruloylated polysaccharides. Involved in the reinforcement of the plant cell wall. Also involved in the responding to wounding or pathogen challenge by the increased formation of cell wall-bound ferulic acid polymers. The sequence is that of Caffeoyl-CoA O-methyltransferase 2 (CCOAOMT2) from Eucalyptus globulus (Tasmanian blue gum).